Consider the following 194-residue polypeptide: 7-methyl-GTP pyrophosphatase (194 aa).

Catalysis depends on D70, which acts as the Proton acceptor.

The protein belongs to the Maf family. YceF subfamily. It depends on a divalent metal cation as a cofactor.

Its subcellular location is the cytoplasm. It catalyses the reaction N(7)-methyl-GTP + H2O = N(7)-methyl-GMP + diphosphate + H(+). In terms of biological role, nucleoside triphosphate pyrophosphatase that hydrolyzes 7-methyl-GTP (m(7)GTP). May have a dual role in cell division arrest and in preventing the incorporation of modified nucleotides into cellular nucleic acids. In Vibrio vulnificus (strain CMCP6), this protein is 7-methyl-GTP pyrophosphatase.